The chain runs to 387 residues: 8-amino-7-oxononanoate synthase (387 aa).

Glycine 109–tyrosine 110 provides a ligand contact to pyridoxal 5'-phosphate. Residue histidine 134 participates in substrate binding. Positions 182, 214, and 242 each coordinate pyridoxal 5'-phosphate. An N6-(pyridoxal phosphate)lysine modification is found at lysine 245. Threonine 359 serves as a coordination point for substrate.

This sequence belongs to the class-II pyridoxal-phosphate-dependent aminotransferase family. BioF subfamily. As to quaternary structure, homodimer. The cofactor is pyridoxal 5'-phosphate.

It catalyses the reaction 6-carboxyhexanoyl-[ACP] + L-alanine + H(+) = (8S)-8-amino-7-oxononanoate + holo-[ACP] + CO2. Its pathway is cofactor biosynthesis; biotin biosynthesis. In terms of biological role, catalyzes the decarboxylative condensation of pimeloyl-[acyl-carrier protein] and L-alanine to produce 8-amino-7-oxononanoate (AON), [acyl-carrier protein], and carbon dioxide. This is 8-amino-7-oxononanoate synthase from Haemophilus ducreyi (strain 35000HP / ATCC 700724).